The following is a 208-amino-acid chain: Probable GTP-binding protein EngB (208 aa).

Residues 23-205 (LTSEMVILGR…RQTLLKYLLT (183 aa)) enclose the EngB-type G domain. GTP contacts are provided by residues 31–38 (GRSNVGKS), 57–61 (GKTRL), 84–87 (DLPG), 154–157 (TKFD), and 182–184 (FNA). Mg(2+) is bound by residues Ser38 and Thr59.

It belongs to the TRAFAC class TrmE-Era-EngA-EngB-Septin-like GTPase superfamily. EngB GTPase family. It depends on Mg(2+) as a cofactor.

Its function is as follows. Necessary for normal cell division and for the maintenance of normal septation. This Helicobacter pylori (strain Shi470) protein is Probable GTP-binding protein EngB.